The following is a 353-amino-acid chain: UDP-N-acetylglucosamine--N-acetylmuramyl-(pentapeptide) pyrophosphoryl-undecaprenol N-acetylglucosamine transferase (353 aa).

Residues 10–12 (TGG), Asn124, Ser183, and Gln283 each bind UDP-N-acetyl-alpha-D-glucosamine.

The protein belongs to the glycosyltransferase 28 family. MurG subfamily.

The protein resides in the cell inner membrane. It carries out the reaction di-trans,octa-cis-undecaprenyl diphospho-N-acetyl-alpha-D-muramoyl-L-alanyl-D-glutamyl-meso-2,6-diaminopimeloyl-D-alanyl-D-alanine + UDP-N-acetyl-alpha-D-glucosamine = di-trans,octa-cis-undecaprenyl diphospho-[N-acetyl-alpha-D-glucosaminyl-(1-&gt;4)]-N-acetyl-alpha-D-muramoyl-L-alanyl-D-glutamyl-meso-2,6-diaminopimeloyl-D-alanyl-D-alanine + UDP + H(+). It functions in the pathway cell wall biogenesis; peptidoglycan biosynthesis. In terms of biological role, cell wall formation. Catalyzes the transfer of a GlcNAc subunit on undecaprenyl-pyrophosphoryl-MurNAc-pentapeptide (lipid intermediate I) to form undecaprenyl-pyrophosphoryl-MurNAc-(pentapeptide)GlcNAc (lipid intermediate II). This chain is UDP-N-acetylglucosamine--N-acetylmuramyl-(pentapeptide) pyrophosphoryl-undecaprenol N-acetylglucosamine transferase, found in Helicobacter pylori (strain Shi470).